The primary structure comprises 344 residues: Holliday junction branch migration complex subunit RuvB (344 aa).

A large ATPase domain (RuvB-L) region spans residues 1-183 (MPDRELISGD…FGLVLRLDPY (183 aa)). ATP-binding positions include Leu-22, Arg-23, Gly-64, Lys-67, Thr-68, Thr-69, 130–132 (EDF), Arg-173, Tyr-183, and Arg-220. Thr-68 lines the Mg(2+) pocket. The interval 184–254 (NTEELKAIVK…VAQTALNLLD (71 aa)) is small ATPAse domain (RuvB-S). A head domain (RuvB-H) region spans residues 257–344 (RYGLDEIDQK…EGDHPSLFEA (88 aa)). Arg-312 and Arg-317 together coordinate DNA.

This sequence belongs to the RuvB family. Homohexamer. Forms an RuvA(8)-RuvB(12)-Holliday junction (HJ) complex. HJ DNA is sandwiched between 2 RuvA tetramers; dsDNA enters through RuvA and exits via RuvB. An RuvB hexamer assembles on each DNA strand where it exits the tetramer. Each RuvB hexamer is contacted by two RuvA subunits (via domain III) on 2 adjacent RuvB subunits; this complex drives branch migration. In the full resolvosome a probable DNA-RuvA(4)-RuvB(12)-RuvC(2) complex forms which resolves the HJ.

The protein resides in the cytoplasm. It carries out the reaction ATP + H2O = ADP + phosphate + H(+). Functionally, the RuvA-RuvB-RuvC complex processes Holliday junction (HJ) DNA during genetic recombination and DNA repair, while the RuvA-RuvB complex plays an important role in the rescue of blocked DNA replication forks via replication fork reversal (RFR). RuvA specifically binds to HJ cruciform DNA, conferring on it an open structure. The RuvB hexamer acts as an ATP-dependent pump, pulling dsDNA into and through the RuvAB complex. RuvB forms 2 homohexamers on either side of HJ DNA bound by 1 or 2 RuvA tetramers; 4 subunits per hexamer contact DNA at a time. Coordinated motions by a converter formed by DNA-disengaged RuvB subunits stimulates ATP hydrolysis and nucleotide exchange. Immobilization of the converter enables RuvB to convert the ATP-contained energy into a lever motion, pulling 2 nucleotides of DNA out of the RuvA tetramer per ATP hydrolyzed, thus driving DNA branch migration. The RuvB motors rotate together with the DNA substrate, which together with the progressing nucleotide cycle form the mechanistic basis for DNA recombination by continuous HJ branch migration. Branch migration allows RuvC to scan DNA until it finds its consensus sequence, where it cleaves and resolves cruciform DNA. The sequence is that of Holliday junction branch migration complex subunit RuvB from Solibacter usitatus (strain Ellin6076).